The primary structure comprises 135 residues: uncharacterized protein (135 aa).

This is an uncharacterized protein from Sinorhizobium fredii (strain NBRC 101917 / NGR234).